Here is a 443-residue protein sequence, read N- to C-terminus: UDP-glucuronic acid decarboxylase 4 (443 aa).

Ala-2 is modified (N-acetylalanine). Residues Ala-2–Arg-43 lie on the Cytoplasmic side of the membrane. Residues Leu-44–Ser-64 form a helical; Signal-anchor for type II membrane protein membrane-spanning segment. The Lumenal segment spans residues Ser-65–Glu-443. Position 151-176 (Asp-151–Asp-176) interacts with NAD(+). Arg-260 lines the substrate pocket. Tyr-263 functions as the Proton acceptor in the catalytic mechanism. An NAD(+)-binding site is contributed by Tyr-263 to Lys-267. Residue Asn-292 coordinates substrate. Position 304 (Arg-304) interacts with NAD(+). Residues Val-305 to Phe-309, Tyr-322 to Arg-329, and Asp-389 to Arg-393 contribute to the substrate site.

Belongs to the NAD(P)-dependent epimerase/dehydratase family. UDP-glucuronic acid decarboxylase subfamily. The cofactor is NAD(+).

The protein resides in the golgi apparatus. Its subcellular location is the golgi stack membrane. The enzyme catalyses UDP-alpha-D-glucuronate + H(+) = UDP-alpha-D-xylose + CO2. It functions in the pathway nucleotide-sugar biosynthesis; UDP-alpha-D-xylose biosynthesis; UDP-alpha-D-xylose from UDP-alpha-D-glucuronate: step 1/1. Functionally, catalyzes the NAD-dependent decarboxylation of UDP-glucuronic acid to UDP-xylose. Necessary for the biosynthesis of the core tetrasaccharide in glycosaminoglycan biosynthesis. The chain is UDP-glucuronic acid decarboxylase 4 (UXS4) from Arabidopsis thaliana (Mouse-ear cress).